Here is a 274-residue protein sequence, read N- to C-terminus: Penicillin-insensitive murein endopeptidase (274 aa).

The first 19 residues, 1-19 (MNKTAIALLALLASSVSLA), serve as a signal peptide directing secretion. Cystine bridges form between Cys44-Cys265, Cys187-Cys235, and Cys216-Cys223. Zn(2+) contacts are provided by His110, His113, Asp120, Asp147, His150, and His211. Positions 227–274 (PLPPPGDGCGAELQSWFEPPKPGTTKPEKKTPPPLPPSCQALLDEHVI) are disordered.

The protein belongs to the peptidase M74 family. Dimer. It depends on Zn(2+) as a cofactor.

It localises to the periplasm. Functionally, murein endopeptidase that cleaves the D-alanyl-meso-2,6-diamino-pimelyl amide bond that connects peptidoglycan strands. Likely plays a role in the removal of murein from the sacculus. The chain is Penicillin-insensitive murein endopeptidase from Shigella dysenteriae serotype 1 (strain Sd197).